An 854-amino-acid polypeptide reads, in one-letter code: Lysine-specific demethylase 3 (854 aa).

A disordered region spans residues 64–88 (QRVQQEEESLGQVPPLTEEEQQRHD). The 206-residue stretch at 601–806 (LRTGNLNIAS…HCYHLTHEFR (206 aa)) folds into the JmjC domain. 3 residues coordinate Fe cation: His643, Asp645, and His774.

Belongs to the JHDM2-like histone demethylase family. It depends on Fe(2+) as a cofactor. Expressed in neurons close to the dorsal lateral neurons involved in circadian rhythm.

It is found in the nucleus. The protein resides in the cytoplasm. The catalysed reaction is N(6),N(6)-dimethyl-L-lysyl(9)-[histone H3] + 2 2-oxoglutarate + 2 O2 = L-lysyl(9)-[histone H3] + 2 formaldehyde + 2 succinate + 2 CO2. Its function is as follows. Histone demethylase that specifically demethylates 'Lys-10' of histone H3 (H3K9), thereby playing a central role in histone code. Demethylation of Lys residue generates formaldehyde and succinate. Probably involved in regulation of chromatin structure, promoting expansion of euchromatin. Negatively regulates rhino-dependent piRNA production capacity of several genomic regions; may help define the frontiers of piRNA clusters by regulating histone methylation levels. May be involved in regulation of behavior and circadian rhythms. The chain is Lysine-specific demethylase 3 from Drosophila melanogaster (Fruit fly).